The following is a 388-amino-acid chain: MRLSLVLALLPVAFGAPTRRDEPAPLHVPRDVDSLIKDTYIVKYKDITAFSAVDEGLKLLSGKPKHIYKGAFKGFSGKIDAKTLELLRDDPSVDFIEQDAIVTLAAYTTQASAPWGLARISTRQRGPTGYTYDDSAGAGTCSYIIDTGIQANHPNFGGRAFQLVSYQGSNADGNGHGTHVAGTIGSTTYGVAKRTTLLGVKVLSDSGSGSTSGIIAGINYVVSDSRSRSCPNGSVANMSLGGGYSASLNSAAKSLIDNNIFLAVAAGNENQNAANVSPASEPTVCTVGATTSADAKASFSNYGSGVDIFAPGQSILSTWIGSSTNTISGTSMASPHIAGLAAYLAGLEGFPGAQALCNRIVALATTGVITGLPSGTPNRLAFNGNPSG.

An N-terminal signal peptide occupies residues 1-15 (MRLSLVLALLPVAFG). Residues 16-105 (APTRRDEPAP…IEQDAIVTLA (90 aa)) constitute a propeptide, removed in mature form. The Peptidase S8 domain occupies 114–388 (PWGLARISTR…RLAFNGNPSG (275 aa)). The cysteines at positions 141 and 230 are disulfide-linked. Residues Asp146 and His176 each act as charge relay system in the active site. N-linked (GlcNAc...) asparagine glycosylation is found at Asn232 and Asn237. Cys285 and Cys357 are disulfide-bonded. The active-site Charge relay system is the Ser331.

This sequence belongs to the peptidase S8 family.

It localises to the secreted. Its activity is regulated as follows. The elicitor proteolytic activity is completely inhibited by PMSF. The activity is also significantly reduced by aprotinin (leading to 37% residual activity), by leupeptin (leading to 54% residual activity), by the ovomucoid trypsin inhibitor (leading to 65% residual activity), and by p-aminobenzamidine (leading to 26% residual activity). Extracellular elicitor protein that induces a strong defense response in strawberry and confers both local and systemic plant resistance against the fungal pathogen Colletotricum acutatum, the casual agent of anthracnose disease. AsES activates a cascade of defense responses, including calcium influx, oxidative burst, hypersensitive cell-death response (HR), accumulation of autofluorescent compounds, cell-wall reinforcement with callose and lignin deposition, salicylic acid accumulation, and expression of defense-related genes, such as PR1, PG1, MYB30, RBOH-D, RBOH-F, CHI23, and FLS. The oxidative burst consists in a progressive extracellular accumulation of H(2)O(2) that starts immediately after the contact with AsES and is preceded by a rapid and transient cell membrane depolarization. During this phase takes place also a rapid intracellular accumulation of NO at the chloroplasts. After the first extracellular H(2)O(2) production phase, two intracellular H(2)O(2) accumulation events occur, the first 2 hours after induction, and the second 7 hours after induction. AsES also produces a transient increase of ion leakage, and a progressive alkalinization of the extracellular medium. Confers also local and systemic plant resistance against Botrytis cinerea in Arabidopsis thaliana. Systemic, but not local resistance is dependent on the length of exposure to AsES. The protection to B.cinerea is due to the induction of the plant defenses via the salicylic acid, jasmonic acid and ethylene signaling pathways. Exhibits subtilisin-like proteolytic activity which is necessary but not sufficient for its elicitor function in strawberry plants. Probably induces defense by means of proteolysis of one or multiple host proteins that are specific targets of this protease. This is Subtilisin-like serine protease AsES from Sarocladium strictum (Black bundle disease fungus).